The primary structure comprises 436 residues: 3-ketoacyl-CoA thiolase (436 aa).

Residue cysteine 99 is the Acyl-thioester intermediate of the active site. Active-site proton acceptor residues include histidine 392 and cysteine 422.

This sequence belongs to the thiolase-like superfamily. Thiolase family. In terms of assembly, heterotetramer of two alpha chains (FadJ) and two beta chains (FadI).

It is found in the cytoplasm. The enzyme catalyses an acyl-CoA + acetyl-CoA = a 3-oxoacyl-CoA + CoA. The protein operates within lipid metabolism; fatty acid beta-oxidation. In terms of biological role, catalyzes the final step of fatty acid oxidation in which acetyl-CoA is released and the CoA ester of a fatty acid two carbons shorter is formed. This is 3-ketoacyl-CoA thiolase from Serratia proteamaculans (strain 568).